A 443-amino-acid chain; its full sequence is Xaa-Pro dipeptidase (443 aa).

Mn(2+) is bound by residues Asp-246, Asp-257, His-339, Glu-384, and Glu-423.

This sequence belongs to the peptidase M24B family. Bacterial-type prolidase subfamily. Mn(2+) is required as a cofactor.

It catalyses the reaction Xaa-L-Pro dipeptide + H2O = an L-alpha-amino acid + L-proline. Splits dipeptides with a prolyl residue in the C-terminal position. In Shigella dysenteriae serotype 1 (strain Sd197), this protein is Xaa-Pro dipeptidase.